Reading from the N-terminus, the 212-residue chain is Peptide methionine sulfoxide reductase MsrA (212 aa).

C52 is an active-site residue.

Belongs to the MsrA Met sulfoxide reductase family.

The catalysed reaction is L-methionyl-[protein] + [thioredoxin]-disulfide + H2O = L-methionyl-(S)-S-oxide-[protein] + [thioredoxin]-dithiol. It catalyses the reaction [thioredoxin]-disulfide + L-methionine + H2O = L-methionine (S)-S-oxide + [thioredoxin]-dithiol. Has an important function as a repair enzyme for proteins that have been inactivated by oxidation. Catalyzes the reversible oxidation-reduction of methionine sulfoxide in proteins to methionine. This is Peptide methionine sulfoxide reductase MsrA from Escherichia coli (strain SMS-3-5 / SECEC).